Reading from the N-terminus, the 431-residue chain is Asparagine--tRNA ligase (431 aa).

It belongs to the class-II aminoacyl-tRNA synthetase family.

It localises to the cytoplasm. It carries out the reaction tRNA(Asn) + L-asparagine + ATP = L-asparaginyl-tRNA(Asn) + AMP + diphosphate + H(+). The chain is Asparagine--tRNA ligase from Thermococcus kodakarensis (strain ATCC BAA-918 / JCM 12380 / KOD1) (Pyrococcus kodakaraensis (strain KOD1)).